A 194-amino-acid chain; its full sequence is FAD-linked sulfhydryl oxidase ERV1 (194 aa).

The disordered stretch occupies residues 44–72 (LSLSLSPPPTPPSPPPPPPEVLKKDSKAA). Positions 49-63 (SPPPTPPSPPPPPPE) are enriched in pro residues. The region spanning 72–172 (APLTKEEVGR…FPCQRVNARW (101 aa)) is the ERV/ALR sulfhydryl oxidase domain. Lys76, Arg81, Trp84, Glu121, His125, Cys148, His151, Asn152, Asn155, Lys160, and Arg171 together coordinate FAD. Cys119 and Cys122 form a disulfide bridge. A disulfide bridge connects residues Cys148 and Cys165. A disulfide bridge connects residues Cys177 and Cys182. The Required for dimerization and substrate specificity motif lies at 177–182 (CPERSC).

As to quaternary structure, homodimer. Requires FAD as cofactor. Contains three disulfide bonds; one catalytic disulfide (Cys-119 to Cys-122), one structural disulfide (Cys-148 to Cys-165), and one shuttle disulfide (Cys-177 to Cys-182).

Its subcellular location is the mitochondrion. It catalyses the reaction 2 R'C(R)SH + O2 = R'C(R)S-S(R)CR' + H2O2. Functionally, FAD-dependent sulfhydryl oxidase that catalyzes disulfide bond formation. Oxidizes thioredoxin in vitro. Required for the import and folding of small cysteine-containing proteins in the mitochondrial intermembrane space, and can act independently of the oxidoreductase MIA40. Can oxidize the cytochrome c oxidase assembly protein COX19, a typical substrate of MIA40. The sequence is that of FAD-linked sulfhydryl oxidase ERV1 from Oryza sativa subsp. japonica (Rice).